The primary structure comprises 505 residues: Trans-cinnamate 4-monooxygenase (505 aa).

The chain crosses the membrane as a helical span at residues 3-23 (LLLLEKTLLALFIAATIAITI). (E)-cinnamate is bound by residues 212–217 (RSRLAQ) and Ala305. Residue Cys446 participates in heme binding.

It belongs to the cytochrome P450 family. The cofactor is heme.

It localises to the membrane. The catalysed reaction is (E)-cinnamate + reduced [NADPH--hemoprotein reductase] + O2 = (E)-4-coumarate + oxidized [NADPH--hemoprotein reductase] + H2O + H(+). The protein operates within phenylpropanoid metabolism; trans-4-coumarate biosynthesis; trans-4-coumarate from trans-cinnamate: step 1/1. Its function is as follows. Catalyzes the first oxidative step of the phenylpropanoid pathway in higher plants by transforming trans-cinnamate into p-coumarate. The compounds formed by this pathway are essential components for lignification, pollination, and defense against ultraviolet light, predators and pathogens. The sequence is that of Trans-cinnamate 4-monooxygenase (CYP73A19) from Cicer arietinum (Chickpea).